Consider the following 293-residue polypeptide: Urease accessory protein UreD 2 (293 aa).

It belongs to the UreD family. UreD, UreF and UreG form a complex that acts as a GTP-hydrolysis-dependent molecular chaperone, activating the urease apoprotein by helping to assemble the nickel containing metallocenter of UreC. The UreE protein probably delivers the nickel.

The protein resides in the cytoplasm. Functionally, required for maturation of urease via the functional incorporation of the urease nickel metallocenter. The sequence is that of Urease accessory protein UreD 2 from Streptomyces griseus subsp. griseus (strain JCM 4626 / CBS 651.72 / NBRC 13350 / KCC S-0626 / ISP 5235).